Here is a 323-residue protein sequence, read N- to C-terminus: tRNA U34 carboxymethyltransferase (323 aa).

Residues Lys91, Trp105, Lys110, Gly130, 152 to 154 (DPT), 181 to 182 (IE), Met196, Tyr200, and Arg315 contribute to the carboxy-S-adenosyl-L-methionine site.

Belongs to the class I-like SAM-binding methyltransferase superfamily. CmoB family. As to quaternary structure, homotetramer.

It catalyses the reaction carboxy-S-adenosyl-L-methionine + 5-hydroxyuridine(34) in tRNA = 5-carboxymethoxyuridine(34) in tRNA + S-adenosyl-L-homocysteine + H(+). Catalyzes carboxymethyl transfer from carboxy-S-adenosyl-L-methionine (Cx-SAM) to 5-hydroxyuridine (ho5U) to form 5-carboxymethoxyuridine (cmo5U) at position 34 in tRNAs. This Escherichia fergusonii (strain ATCC 35469 / DSM 13698 / CCUG 18766 / IAM 14443 / JCM 21226 / LMG 7866 / NBRC 102419 / NCTC 12128 / CDC 0568-73) protein is tRNA U34 carboxymethyltransferase.